The primary structure comprises 235 residues: Large ribosomal subunit protein uL1 (235 aa).

The protein belongs to the universal ribosomal protein uL1 family. Part of the 50S ribosomal subunit.

Binds directly to 23S rRNA. The L1 stalk is quite mobile in the ribosome, and is involved in E site tRNA release. Functionally, protein L1 is also a translational repressor protein, it controls the translation of the L11 operon by binding to its mRNA. The protein is Large ribosomal subunit protein uL1 of Prochlorococcus marinus (strain AS9601).